The chain runs to 222 residues: Putative O-methyltransferase MAV_1364 (222 aa).

S-adenosyl-L-methionine is bound by residues V49, E71, 73–74, S79, D97, and I98; that span reads GT. D145 contacts substrate. An S-adenosyl-L-methionine-binding site is contributed by D147.

The protein belongs to the class I-like SAM-binding methyltransferase superfamily. Cation-dependent O-methyltransferase family.

In Mycobacterium avium (strain 104), this protein is Putative O-methyltransferase MAV_1364.